We begin with the raw amino-acid sequence, 410 residues long: Homeobox protein Hox-A3a (410 aa).

The disordered stretch occupies residues 79 to 126; sequence VTDTSDNKQPPTAPSGPSSPSSLNQIPNIDSAAKNPVHVSPTPSTRKH. The Antp-type hexapeptide signature appears at 127 to 132; that stretch reads IFPWMK. A DNA-binding region (homeobox) is located at residues 163 to 222; the sequence is SKRARTAYTSAQLVELEKEFHFNRYLCRPRRVEMANLLNLTERQIKIWFQNRRMKYKKDQ. The disordered stretch occupies residues 222–249; it reads QKGLGMMPSPGAQSPHSPVSLSSGGGGG.

It belongs to the Antp homeobox family.

Its subcellular location is the nucleus. Functionally, sequence-specific transcription factor which is part of a developmental regulatory system that provides cells with specific positional identities on the anterior-posterior axis. This is Homeobox protein Hox-A3a (hoxa3a) from Danio rerio (Zebrafish).